The sequence spans 354 residues: Rhodopsin (354 aa).

Over 1–36 (MNGTEGPNFYVPMSNKTGVVRSPFDYPQYYLAEPWQ) the chain is Extracellular. Residues Asn2 and Asn15 are each glycosylated (N-linked (GlcNAc...) asparagine). Residues 37-61 (YSALAAYMFLLILLGLPINFMTLFV) form a helical membrane-spanning segment. Residues 62 to 73 (TIQHKKLRTPLN) lie on the Cytoplasmic side of the membrane. A helical transmembrane segment spans residues 74–96 (YILLNLVFANHFMVLCGFTVTMY). At 97-110 (TSMHGYFIFGPTGC) the chain is on the extracellular side. Residues Cys110 and Cys187 are joined by a disulfide bond. The chain crosses the membrane as a helical span at residues 111 to 133 (YIEGFFATLGGEVALWSLVVLAV). The short motif at 134–136 (ERY) is the 'Ionic lock' involved in activated form stabilization element. At 134 to 152 (ERYIVVCKPMANFRFGENH) the chain is on the cytoplasmic side. Residues 153-173 (AIMGVAFTWIMALSCAAPPLF) traverse the membrane as a helical segment. Residues 174-202 (GWSRYIPEGMQCSCGVDYYTLKPEVNNES) are Extracellular-facing. The helical transmembrane segment at 203–224 (FVIYMFIVHFTIPLIVIFFCYG) threads the bilayer. The Cytoplasmic segment spans residues 225–252 (RLLCTVKEAAAQQQESLTTQKAEKEVTR). Residues 253-274 (MVVIMVVFFLICWVPYAYVAFY) traverse the membrane as a helical segment. Topologically, residues 275–286 (IFTHQGSNFGPV) are extracellular. The helical transmembrane segment at 287–308 (FMTVPAFFAKSSAIYNPVIYIV) threads the bilayer. The residue at position 296 (Lys296) is an N6-(retinylidene)lysine. The Cytoplasmic portion of the chain corresponds to 309–354 (LNKQFRNCLITTLCCGKNPFGDEDGSSAATSKTEASSVSSSQVSPA). Residues Cys322 and Cys323 are each lipidated (S-palmitoyl cysteine). The segment at 331-354 (EDGSSAATSKTEASSVSSSQVSPA) is disordered. Over residues 334-354 (SSAATSKTEASSVSSSQVSPA) the composition is skewed to low complexity.

It belongs to the G-protein coupled receptor 1 family. Opsin subfamily. Contains one covalently linked retinal chromophore. Upon light absorption, the covalently bound 11-cis-retinal is converted to all-trans-retinal. After hydrolysis of the Schiff base and release of the covalently bound all-trans-retinal, active rhodopsin is regenerated by binding of a fresh molecule of 11-cis-retinal.

The protein resides in the membrane. It localises to the cell projection. The protein localises to the cilium. It is found in the photoreceptor outer segment. Photoreceptor required for image-forming vision at low light intensity. Required for photoreceptor cell viability after birth. Light-induced isomerization of 11-cis to all-trans retinal triggers a conformational change that activates signaling via G-proteins. Subsequent receptor phosphorylation mediates displacement of the bound G-protein alpha subunit by arrestin and terminates signaling. The sequence is that of Rhodopsin (rho) from Xenopus laevis (African clawed frog).